Here is a 205-residue protein sequence, read N- to C-terminus: Small ribosomal subunit protein uS4 (205 aa).

The interval 18–46 (NIWGRPKSPVNRREYGPGQHGQRRKGKLS) is disordered. The 61-residue stretch at 94-154 (RRLDAVVYRA…EASKQLAHVL (61 aa)) folds into the S4 RNA-binding domain.

This sequence belongs to the universal ribosomal protein uS4 family. Part of the 30S ribosomal subunit. Contacts protein S5. The interaction surface between S4 and S5 is involved in control of translational fidelity.

Functionally, one of the primary rRNA binding proteins, it binds directly to 16S rRNA where it nucleates assembly of the body of the 30S subunit. In terms of biological role, with S5 and S12 plays an important role in translational accuracy. The polypeptide is Small ribosomal subunit protein uS4 (Bradyrhizobium diazoefficiens (strain JCM 10833 / BCRC 13528 / IAM 13628 / NBRC 14792 / USDA 110)).